Reading from the N-terminus, the 2568-residue chain is Highly reducing polyketide synthase AN6791 (2568 aa).

The 435-residue stretch at 11-445 (AEPIAIVGLS…GTNAHLIVES (435 aa)) folds into the Ketosynthase family 3 (KS3) domain. Catalysis depends on for beta-ketoacyl synthase activity residues C200, H326, and H366. A Malonyl-CoA:ACP transacylase (MAT) domain is found at 558-882 (VFTGQGAQWY…GSLVREVSAV (325 aa)). Residues 949 to 1087 (HDLLGSLVLG…GLITMEPEDA (139 aa)) form an N-terminal hotdog fold region. One can recognise a PKS/mFAS DH domain in the interval 949–1258 (HDLLGSLVLG…FQSVGRSAAP (310 aa)). H981 (proton acceptor; for dehydratase activity) is an active-site residue. Residues 1104–1258 (TRRFGPSDLY…FQSVGRSAAP (155 aa)) are C-terminal hotdog fold. D1169 acts as the Proton donor; for dehydratase activity in catalysis. The interval 1311-1620 (RACLYFIYDA…EVRDCESDEW (310 aa)) is methyltransferase (CMet) domain. One can recognise an Enoyl reductase (ER) domain in the interval 1857-2174 (GLLDTIAFDD…VGKHSGKVVL (318 aa)). Residues 2197–2375 (ASYLLVGGAG…AVSMDLGPVK (179 aa)) enclose the Ketoreductase (KR) domain. One can recognise a Carrier domain in the interval 2481-2558 (QAEKLVVEAI…ALASEVTRKS (78 aa)). Position 2518 is an O-(pantetheine 4'-phosphoryl)serine (S2518).

Pantetheine 4'-phosphate is required as a cofactor.

The protein operates within secondary metabolite biosynthesis. Functionally, highly reducing polyketide synthase; part of a cluster that mediates the biosynthesis of a yet undetermined secondary metabolite. With esterase AN6793, produces a pathway intermediate compound with molecular weight 258. The polypeptide is Highly reducing polyketide synthase AN6791 (Emericella nidulans (strain FGSC A4 / ATCC 38163 / CBS 112.46 / NRRL 194 / M139) (Aspergillus nidulans)).